The primary structure comprises 262 residues: Nodulation protein J (262 aa).

Positions 33–259 (ASLLGNLADP…FASIALFRRR (227 aa)) constitute an ABC transmembrane type-2 domain. A run of 7 helical transmembrane segments spans residues 37–57 (GNLA…GLIV), 64–84 (SYIA…SATF), 102–122 (GILF…VWAA), 125–145 (SVLA…ASWT), 149–169 (CAIP…MVVI), 177–197 (YFVF…GAVF), and 236–256 (LHVG…IALF).

It belongs to the ABC-2 integral membrane protein family. Lipooligosaccharide exporter (TC 3.A.1.102) subfamily. In terms of assembly, the complex is composed of two ATP-binding proteins (NodI) and two transmembrane proteins (NodJ).

The protein localises to the cell inner membrane. In terms of biological role, part of the ABC transporter complex NodIJ involved in the export of the nodulation factors (Nod factors), the bacterial signal molecules that induce symbiosis and subsequent nodulation induction. Nod factors are LCO (lipo-chitin oligosaccharide), a modified beta-1,4-linked N-acetylglucosamine oligosaccharide. This subunit encodes the transporter. The protein is Nodulation protein J (nodJ) of Bradyrhizobium diazoefficiens (strain JCM 10833 / BCRC 13528 / IAM 13628 / NBRC 14792 / USDA 110).